A 698-amino-acid polypeptide reads, in one-letter code: UvrABC system protein B (698 aa).

A Helicase ATP-binding domain is found at 25-183; the sequence is NGLNSGLVHQ…TLIDLQFERN (159 aa). An ATP-binding site is contributed by 38–45; that stretch reads GATGTGKT. The short motif at 91 to 114 is the Beta-hairpin element; the sequence is YYDAYTPEAYVPSKDLYIEKEAQI. Residues 428-594 enclose the Helicase C-terminal domain; sequence QIDDLLGEIK…GIVKAVRDLT (167 aa). Positions 622–657 constitute a UVR domain; that stretch reads FKVINALEKQMKQAAKDLEFEKAALLRDQLTEMRQT.

The protein belongs to the UvrB family. As to quaternary structure, forms a heterotetramer with UvrA during the search for lesions. Interacts with UvrC in an incision complex.

Its subcellular location is the cytoplasm. The UvrABC repair system catalyzes the recognition and processing of DNA lesions. A damage recognition complex composed of 2 UvrA and 2 UvrB subunits scans DNA for abnormalities. Upon binding of the UvrA(2)B(2) complex to a putative damaged site, the DNA wraps around one UvrB monomer. DNA wrap is dependent on ATP binding by UvrB and probably causes local melting of the DNA helix, facilitating insertion of UvrB beta-hairpin between the DNA strands. Then UvrB probes one DNA strand for the presence of a lesion. If a lesion is found the UvrA subunits dissociate and the UvrB-DNA preincision complex is formed. This complex is subsequently bound by UvrC and the second UvrB is released. If no lesion is found, the DNA wraps around the other UvrB subunit that will check the other stand for damage. In Herpetosiphon aurantiacus (strain ATCC 23779 / DSM 785 / 114-95), this protein is UvrABC system protein B.